The following is a 319-amino-acid chain: GATA transcription factor 18 (319 aa).

The span at 1–15 (MPDAAAAAAAAQDAD) shows a compositional bias: low complexity. The interval 1 to 74 (MPDAAAAAAA…AAPEPVSALL (74 aa)) is disordered. Over residues 31–60 (DNDDDDGDDGTEEDEEEDDDEEGDEEELPP) the composition is skewed to acidic residues. Residues 74–109 (LPGSPNQLTLLFQGEVYVFESVTPEKVQAVLLLLGR) form the Tify domain. The CCT domain occupies 143-185 (RVASLIRFREKRKERNFDKKIRYAVRKEVALRMQRRKGQFAGR). The segment at 215–242 (CQNCGTSEKMTPAMRRGPAGPRTLCNAC) adopts a GATA-type zinc-finger fold. A disordered region spans residues 292-319 (ITASHGEVMGDSTPANEAEIGAPKAQSQ).

It belongs to the type IV zinc-finger family. Class C subfamily.

The protein resides in the nucleus. In terms of biological role, transcriptional activator that specifically binds 5'-GATA-3' or 5'-GAT-3' motifs within gene promoters. This chain is GATA transcription factor 18, found in Oryza sativa subsp. japonica (Rice).